The primary structure comprises 492 residues: Adenylyltransferase and sulfurtransferase uba4 (492 aa).

ATP is bound by residues glycine 99, aspartate 120, 127–131 (SNLHR), lysine 144, and 188–189 (DN). Zn(2+) is bound by residues cysteine 237 and cysteine 240. Catalysis depends on cysteine 254, which acts as the Glycyl thioester intermediate; for adenylyltransferase activity. Zn(2+) is bound by residues cysteine 317 and cysteine 320. The Rhodanese domain maps to 378–490 (GSKEPTIIDV…WREQIDPDWP (113 aa)). The Cysteine persulfide intermediate; for sulfurtransferase activity role is filled by cysteine 445.

This sequence in the N-terminal section; belongs to the HesA/MoeB/ThiF family. UBA4 subfamily. Zn(2+) serves as cofactor.

The protein localises to the cytoplasm. It is found in the cytosol. It carries out the reaction [molybdopterin-synthase sulfur-carrier protein]-C-terminal Gly-Gly + ATP + H(+) = [molybdopterin-synthase sulfur-carrier protein]-C-terminal Gly-Gly-AMP + diphosphate. The catalysed reaction is [molybdopterin-synthase sulfur-carrier protein]-C-terminal Gly-Gly-AMP + S-sulfanyl-L-cysteinyl-[cysteine desulfurase] + AH2 = [molybdopterin-synthase sulfur-carrier protein]-C-terminal-Gly-aminoethanethioate + L-cysteinyl-[cysteine desulfurase] + A + AMP + 2 H(+). The protein operates within tRNA modification; 5-methoxycarbonylmethyl-2-thiouridine-tRNA biosynthesis. It participates in cofactor biosynthesis; molybdopterin biosynthesis. In terms of biological role, plays a central role in 2-thiolation of mcm(5)S(2)U at tRNA wobble positions of cytosolic tRNA(Lys), tRNA(Glu) and tRNA(Gln). Also essential during biosynthesis of the molybdenum cofactor. Acts by mediating the C-terminal thiocarboxylation of sulfur carriers urm1 and mocs2a. Its N-terminus first activates urm1 and mocs2a as acyl-adenylates (-COAMP), then the persulfide sulfur on the catalytic cysteine is transferred to urm1 and mocs2a to form thiocarboxylation (-COSH) of their C-terminus. The reaction probably involves hydrogen sulfide that is generated from the persulfide intermediate and that acts as a nucleophile towards urm1 and mocs2a. Subsequently, a transient disulfide bond is formed. Does not use thiosulfate as sulfur donor; nfs1 probably acting as a sulfur donor for thiocarboxylation reactions. The chain is Adenylyltransferase and sulfurtransferase uba4 from Aspergillus clavatus (strain ATCC 1007 / CBS 513.65 / DSM 816 / NCTC 3887 / NRRL 1 / QM 1276 / 107).